Here is a 155-residue protein sequence, read N- to C-terminus: 6,7-dimethyl-8-ribityllumazine synthase (155 aa).

Residues Trp24, 58–60, and 82–84 each bind 5-amino-6-(D-ribitylamino)uracil; these read AFE and AVI. 87 to 88 serves as a coordination point for (2S)-2-hydroxy-3-oxobutyl phosphate; sequence GT. Residue His90 is the Proton donor of the active site. 5-amino-6-(D-ribitylamino)uracil is bound at residue Phe115. Arg129 is a (2S)-2-hydroxy-3-oxobutyl phosphate binding site.

This sequence belongs to the DMRL synthase family. Forms an icosahedral capsid composed of 60 subunits, arranged as a dodecamer of pentamers.

It carries out the reaction (2S)-2-hydroxy-3-oxobutyl phosphate + 5-amino-6-(D-ribitylamino)uracil = 6,7-dimethyl-8-(1-D-ribityl)lumazine + phosphate + 2 H2O + H(+). Its pathway is cofactor biosynthesis; riboflavin biosynthesis; riboflavin from 2-hydroxy-3-oxobutyl phosphate and 5-amino-6-(D-ribitylamino)uracil: step 1/2. Catalyzes the formation of 6,7-dimethyl-8-ribityllumazine by condensation of 5-amino-6-(D-ribitylamino)uracil with 3,4-dihydroxy-2-butanone 4-phosphate. This is the penultimate step in the biosynthesis of riboflavin. The sequence is that of 6,7-dimethyl-8-ribityllumazine synthase from Saccharophagus degradans (strain 2-40 / ATCC 43961 / DSM 17024).